A 283-amino-acid chain; its full sequence is Glutamate racemase (283 aa).

Substrate is bound by residues 7 to 8 (DS) and 39 to 40 (YG). The active-site Proton donor/acceptor is the cysteine 70. Substrate is bound at residue 71-72 (NT). The active-site Proton donor/acceptor is the cysteine 206. 207–208 (TH) contacts substrate.

The protein belongs to the aspartate/glutamate racemases family.

It catalyses the reaction L-glutamate = D-glutamate. It participates in cell wall biogenesis; peptidoglycan biosynthesis. Provides the (R)-glutamate required for cell wall biosynthesis. The chain is Glutamate racemase from Caulobacter sp. (strain K31).